Consider the following 478-residue polypeptide: Glycogen synthase (478 aa).

Lys15 contacts ADP-alpha-D-glucose.

Belongs to the glycosyltransferase 1 family. Bacterial/plant glycogen synthase subfamily.

The catalysed reaction is [(1-&gt;4)-alpha-D-glucosyl](n) + ADP-alpha-D-glucose = [(1-&gt;4)-alpha-D-glucosyl](n+1) + ADP + H(+). It participates in glycan biosynthesis; glycogen biosynthesis. Functionally, synthesizes alpha-1,4-glucan chains using ADP-glucose. This Lactococcus lactis subsp. lactis (strain IL1403) (Streptococcus lactis) protein is Glycogen synthase.